Consider the following 213-residue polypeptide: Thiopurine S-methyltransferase (213 aa).

4 residues coordinate S-adenosyl-L-methionine: tryptophan 10, leucine 46, glutamate 67, and arginine 124.

This sequence belongs to the class I-like SAM-binding methyltransferase superfamily. TPMT family.

The protein localises to the cytoplasm. It carries out the reaction S-adenosyl-L-methionine + a thiopurine = S-adenosyl-L-homocysteine + a thiopurine S-methylether.. The polypeptide is Thiopurine S-methyltransferase (Xanthobacter autotrophicus (strain ATCC BAA-1158 / Py2)).